The sequence spans 89 residues: MSLSVEAKAKIVADFGRGTNDSGSSEVQVALLTAQINHLQGHFSEHKKDHHSRRGLLRMVSQRRKLLDYLKRKDVARYTSLIERLGLRR.

It belongs to the universal ribosomal protein uS15 family. In terms of assembly, part of the 30S ribosomal subunit. Forms a bridge to the 50S subunit in the 70S ribosome, contacting the 23S rRNA.

Its function is as follows. One of the primary rRNA binding proteins, it binds directly to 16S rRNA where it helps nucleate assembly of the platform of the 30S subunit by binding and bridging several RNA helices of the 16S rRNA. Functionally, forms an intersubunit bridge (bridge B4) with the 23S rRNA of the 50S subunit in the ribosome. The protein is Small ribosomal subunit protein uS15 of Serratia proteamaculans (strain 568).